The primary structure comprises 269 residues: Cytochrome c oxidase subunit 3 (269 aa).

Transmembrane regions (helical) follow at residues 46 to 66 (NSYY…AFWF), 90 to 110 (GVIL…WAFF), 138 to 160 (PLLN…HSLI), 167 to 187 (ALYG…FQGV), 207 to 227 (FGTG…AVAL), and 247 to 267 (ILYW…IYYW).

Belongs to the cytochrome c oxidase subunit 3 family. Component of the cytochrome c oxidase (complex IV, CIV), a multisubunit enzyme composed of a catalytic core of 3 subunits and several supernumerary subunits. The complex exists as a monomer or a dimer and forms supercomplexes (SCs) in the inner mitochondrial membrane with ubiquinol-cytochrome c oxidoreductase (cytochrome b-c1 complex, complex III, CIII).

The protein localises to the mitochondrion inner membrane. The catalysed reaction is 4 Fe(II)-[cytochrome c] + O2 + 8 H(+)(in) = 4 Fe(III)-[cytochrome c] + 2 H2O + 4 H(+)(out). Component of the cytochrome c oxidase, the last enzyme in the mitochondrial electron transport chain which drives oxidative phosphorylation. The respiratory chain contains 3 multisubunit complexes succinate dehydrogenase (complex II, CII), ubiquinol-cytochrome c oxidoreductase (cytochrome b-c1 complex, complex III, CIII) and cytochrome c oxidase (complex IV, CIV), that cooperate to transfer electrons derived from NADH and succinate to molecular oxygen, creating an electrochemical gradient over the inner membrane that drives transmembrane transport and the ATP synthase. Cytochrome c oxidase is the component of the respiratory chain that catalyzes the reduction of oxygen to water. Electrons originating from reduced cytochrome c in the intermembrane space (IMS) are transferred via the dinuclear copper A center (CU(A)) of subunit 2 and heme A of subunit 1 to the active site in subunit 1, a binuclear center (BNC) formed by heme A3 and copper B (CU(B)). The BNC reduces molecular oxygen to 2 water molecules using 4 electrons from cytochrome c in the IMS and 4 protons from the mitochondrial matrix. This Podospora anserina (strain S / ATCC MYA-4624 / DSM 980 / FGSC 10383) (Pleurage anserina) protein is Cytochrome c oxidase subunit 3 (COIII).